The sequence spans 432 residues: MGKSVVVLGAQWGDEGKGKIVDLLTDRVKYVVRYQGGHNAGHTLIINGEKTVLRLIPSGILRENVTCLIGNGVVLSPTALMQEMGELESRGINVRERLLISEACPLILPYHVAMDKARESALGNKAIGTTGRGIGPAYEDKVARRGLRVGDLFDKQSFAEKLKNILDYYNFQLVNYYKVEAVDYQKTLDEVLAVADIITAMVADVTTILDVARKNGDNILFEGAQGTMLDIDQGTYPYVTSSNTTAGGVSTGAGFGPRHIDYVLGIIKAYCTRVGGGPFTTELFDEVGAEIARKGNEFGAVTGRPRRCGWFDAVAIKRAIQTNSISGFCMTKLDVLDGFREVKICVGYKMPNGEIAEYAPLAAKDWEGVEPIYETLPGWQENTFGITDVNQLPENTRNYIKRIEEVTGVPIAILSTGPDRVETMILNDPFAV.

GTP is bound by residues 13 to 19 and 41 to 43; these read GDEGKGK and GHT. Asp14 acts as the Proton acceptor in catalysis. Residues Asp14 and Gly41 each contribute to the Mg(2+) site. Residues 14 to 17, 39 to 42, Thr130, Arg144, Gln225, Thr240, and Arg304 contribute to the IMP site; these read DEGK and NAGH. His42 (proton donor) is an active-site residue. 300–306 contributes to the substrate binding site; the sequence is AVTGRPR. Residues Arg306, 332 to 334, and 415 to 417 contribute to the GTP site; these read KLD and STG.

This sequence belongs to the adenylosuccinate synthetase family. In terms of assembly, homodimer. The cofactor is Mg(2+).

It is found in the cytoplasm. It carries out the reaction IMP + L-aspartate + GTP = N(6)-(1,2-dicarboxyethyl)-AMP + GDP + phosphate + 2 H(+). It participates in purine metabolism; AMP biosynthesis via de novo pathway; AMP from IMP: step 1/2. Plays an important role in the de novo pathway of purine nucleotide biosynthesis. Catalyzes the first committed step in the biosynthesis of AMP from IMP. In Histophilus somni (strain 2336) (Haemophilus somnus), this protein is Adenylosuccinate synthetase.